The chain runs to 126 residues: Cystatin-like cysteine protease inhibitor EPIC1 (126 aa).

The signal sequence occupies residues 1-21; it reads MTFLRPILALLAATALVTTSA. The N-linked (GlcNAc...) asparagine glycan is linked to asparagine 46. The Secondary area of contact signature appears at 69–73; that stretch reads QVVSG.

Belongs to the cystatin family. Interacts with the host papain-like cysteine protease RCR3. Interacts with the host papain-like cysteine protease C14.

It localises to the secreted. Its function is as follows. Secreted effector that interacts with and inhibits the pathogenesis-related papain-like cysteine proteases C14 and RCR3 of host plants. Inhibition of host proteases by a pathogen extracellular protease inhibitor forms a specific type of defense-counterdefense mechanism between plants and microbial pathogens. This chain is Cystatin-like cysteine protease inhibitor EPIC1, found in Phytophthora infestans (Potato late blight agent).